Reading from the N-terminus, the 389-residue chain is Chalcone synthase 6 (389 aa).

The active site involves Cys164.

Belongs to the thiolase-like superfamily. Chalcone/stilbene synthases family.

The catalysed reaction is (E)-4-coumaroyl-CoA + 3 malonyl-CoA + 3 H(+) = 2',4,4',6'-tetrahydroxychalcone + 3 CO2 + 4 CoA. It functions in the pathway secondary metabolite biosynthesis; flavonoid biosynthesis. In terms of biological role, the primary product of this enzyme is 4,2',4',6'-tetrahydroxychalcone (also termed naringenin-chalcone or chalcone) which can under specific conditions spontaneously isomerize into naringenin. The protein is Chalcone synthase 6 (CHS6) of Pisum sativum (Garden pea).